The chain runs to 119 residues: Cytochrome c55X (119 aa).

An N-terminal signal peptide occupies residues 1-20; sequence MNAPPDFRRAASHALWLALA. Heme c-binding residues include Cys-51, Cys-54, and His-55.

Post-translationally, binds 1 heme c group covalently per subunit.

It localises to the periplasm. In terms of biological role, monoheme c-type cytochrome. The sequence is that of Cytochrome c55X (nirC) from Pseudomonas aeruginosa (strain ATCC 15692 / DSM 22644 / CIP 104116 / JCM 14847 / LMG 12228 / 1C / PRS 101 / PAO1).